The following is an 87-amino-acid chain: Large ribosomal subunit protein bL27 (87 aa).

Belongs to the bacterial ribosomal protein bL27 family.

This chain is Large ribosomal subunit protein bL27, found in Phocaeicola vulgatus (strain ATCC 8482 / DSM 1447 / JCM 5826 / CCUG 4940 / NBRC 14291 / NCTC 11154) (Bacteroides vulgatus).